Here is a 315-residue protein sequence, read N- to C-terminus: tRNA dimethylallyltransferase (315 aa).

Position 13 to 20 (13 to 20 (GPTASGKT)) interacts with ATP. 15–20 (TASGKT) is a substrate binding site. 4 interaction with substrate tRNA regions span residues 38–41 (DSAL), 162–166 (QRLSR), 243–248 (RCVGYR), and 276–283 (KRQITWLR).

This sequence belongs to the IPP transferase family. As to quaternary structure, monomer. The cofactor is Mg(2+).

The catalysed reaction is adenosine(37) in tRNA + dimethylallyl diphosphate = N(6)-dimethylallyladenosine(37) in tRNA + diphosphate. Catalyzes the transfer of a dimethylallyl group onto the adenine at position 37 in tRNAs that read codons beginning with uridine, leading to the formation of N6-(dimethylallyl)adenosine (i(6)A). The polypeptide is tRNA dimethylallyltransferase (Vibrio cholerae serotype O1 (strain ATCC 39541 / Classical Ogawa 395 / O395)).